Reading from the N-terminus, the 100-residue chain is MNLTPREKDKLLVSLAAIVARGRLERGVKLNHPEAIALITDYVVEGARDGRSVADLMQAGAQVVRAEQCMPGIPEMIHDVQVEATFPDGTKLVTVHHPIR.

It belongs to the urease gamma subunit family. In terms of assembly, heterotrimer of UreA (gamma), UreB (beta) and UreC (alpha) subunits. Three heterotrimers associate to form the active enzyme.

The protein resides in the cytoplasm. It carries out the reaction urea + 2 H2O + H(+) = hydrogencarbonate + 2 NH4(+). Its pathway is nitrogen metabolism; urea degradation; CO(2) and NH(3) from urea (urease route): step 1/1. The chain is Urease subunit gamma from Dinoroseobacter shibae (strain DSM 16493 / NCIMB 14021 / DFL 12).